The chain runs to 196 residues: Ribonuclease H (196 aa).

The 139-residue stretch at 58 to 196 (LAKEEIIWES…GEIKADYGRK (139 aa)) folds into the RNase H type-1 domain. D71, E109, D132, and D192 together coordinate Mg(2+).

The protein belongs to the RNase H family. Mn(2+) serves as cofactor. Requires Mg(2+) as cofactor.

Its subcellular location is the cytoplasm. It carries out the reaction Endonucleolytic cleavage to 5'-phosphomonoester.. In terms of biological role, endonuclease that specifically degrades the RNA of RNA-DNA hybrids. The protein is Ribonuclease H (rnhA) of Halalkalibacterium halodurans (strain ATCC BAA-125 / DSM 18197 / FERM 7344 / JCM 9153 / C-125) (Bacillus halodurans).